The sequence spans 338 residues: Glyceraldehyde-3-phosphate dehydrogenase (338 aa).

NAD(+)-binding positions include 12–13, Asp34, and Arg79; that span reads RI. Residues 150–152, Thr181, 210–211, and Arg233 contribute to the D-glyceraldehyde 3-phosphate site; these read SCT and TG. The Nucleophile role is filled by Cys151. Position 315 (Asn315) interacts with NAD(+).

The protein belongs to the glyceraldehyde-3-phosphate dehydrogenase family. As to quaternary structure, homotetramer.

It is found in the cytoplasm. It catalyses the reaction D-glyceraldehyde 3-phosphate + phosphate + NAD(+) = (2R)-3-phospho-glyceroyl phosphate + NADH + H(+). Its pathway is carbohydrate degradation; glycolysis; pyruvate from D-glyceraldehyde 3-phosphate: step 1/5. The sequence is that of Glyceraldehyde-3-phosphate dehydrogenase (gpd-1) from Neurospora crassa (strain ATCC 24698 / 74-OR23-1A / CBS 708.71 / DSM 1257 / FGSC 987).